A 332-amino-acid polypeptide reads, in one-letter code: tRNA-dihydrouridine(20/20a) synthase (332 aa).

Residues 19–21 (PML) and Gln71 each bind FMN. The active-site Proton donor is the Cys101. Residues Lys140, His173, 213-215 (NGG), and 235-236 (GR) contribute to the FMN site.

The protein belongs to the Dus family. DusA subfamily. FMN serves as cofactor.

The catalysed reaction is 5,6-dihydrouridine(20) in tRNA + NADP(+) = uridine(20) in tRNA + NADPH + H(+). It carries out the reaction 5,6-dihydrouridine(20) in tRNA + NAD(+) = uridine(20) in tRNA + NADH + H(+). The enzyme catalyses 5,6-dihydrouridine(20a) in tRNA + NADP(+) = uridine(20a) in tRNA + NADPH + H(+). It catalyses the reaction 5,6-dihydrouridine(20a) in tRNA + NAD(+) = uridine(20a) in tRNA + NADH + H(+). Catalyzes the synthesis of 5,6-dihydrouridine (D), a modified base found in the D-loop of most tRNAs, via the reduction of the C5-C6 double bond in target uridines. Specifically modifies U20 and U20a in tRNAs. The sequence is that of tRNA-dihydrouridine(20/20a) synthase from Salmonella typhi.